We begin with the raw amino-acid sequence, 199 residues long: Recombination protein RecR (199 aa).

The segment at 57-72 (CNLCNNFSEQEICPLC) adopts a C4-type zinc-finger fold. A Toprim domain is found at 80–175 (TLLCIVEMPS…QVSRIARGLP (96 aa)).

It belongs to the RecR family.

May play a role in DNA repair. It seems to be involved in an RecBC-independent recombinational process of DNA repair. It may act with RecF and RecO. In Methylobacillus flagellatus (strain ATCC 51484 / DSM 6875 / VKM B-1610 / KT), this protein is Recombination protein RecR.